The sequence spans 768 residues: Cullin-3 (768 aa).

Serine 2 carries the N-acetylserine modification. The segment at serine 2 to isoleucine 41 is interaction with KLHL18. Residue serine 585 is modified to Phosphoserine. The disordered stretch occupies residues valine 677–aspartate 698. The span at glycine 682–aspartate 698 shows a compositional bias: basic and acidic residues. Positions aspartate 698–aspartate 760 constitute a Cullin neddylation domain. Lysine 712 participates in a covalent cross-link: Glycyl lysine isopeptide (Lys-Gly) (interchain with G-Cter in NEDD8).

Belongs to the cullin family. As to quaternary structure, forms neddylation-dependent homodimers. Component of multiple BCR (BTB-CUL3-RBX1) E3 ubiquitin-protein ligase complexes formed of CUL3, RBX1 and a variable BTB domain-containing protein acting as both, adapter to cullin and substrate recognition subunit. The BCR complex may be active as a heterodimeric complex, in which NEDD8, covalently attached to one CUL3 molecule, binds to the C-terminus of a second CUL3 molecule. Interacts with RBX1, RNF7, CYCE and TIP120A/CAND1. Part of the BCR(SPOP) containing SPOP, and of BCR containing homodimeric SPOPL or the heterodimer formed by SPOP and SPOPL. Part of the probable BCR(KLHL9-KLHL13) complex with BTB domain proteins KLHL9 and KLHL13. Part of the BCR(KLHL41) complex containing KLHL41. Component of the BCR(KLHL12) E3 ubiquitin ligase complex, at least composed of CUL3 and KLHL12 and RBX1. Component of the BCR(KLHL3) E3 ubiquitin ligase complex, at least composed of CUL3 and KLHL3 and RBX1. Part of the BCR(ENC1) complex containing ENC1. Part of a complex consisting of BMI1/PCGF4, CUL3 and SPOP. Part of a complex consisting of BRMS1, CUL3 and SPOP. Component of the BCR(KLHL21) E3 ubiquitin ligase complex, at least composed of CUL3, KLHL21 and RBX1. Component of the BCR(KLHL22) E3 ubiquitin ligase complex, at least composed of CUL3, KLHL22 and RBX1. Component of the BCR(KLHL25) E3 ubiquitin ligase complex, at least composed of CUL3, KLHL25 and RBX1. Part of a complex consisting of MACROH2A1, CUL3 and SPOP. Component of the BCR(KLHL42) E3 ubiquitin ligase complex, at least composed of CUL3 and KLHL42. Interacts with KLHL42 (via the BTB domain). Interacts with KATNA1; the interaction is enhanced by KLHL42. Component of the BCR(KBTBD8) E3 ubiquitin ligase complex, at least composed of CUL3, KBTBD8 and RBX1. Interacts with KCTD5, KLHL9, KLHL11, KLHL13, GAN, ZBTB16, KLHL3, KLHL15, KLHL20, KLHL36, GMCL2, BTBD1. Part of a complex that contains CUL3, RBX1 and GAN. Interacts (via BTB domain) with KLHL17; the interaction regulates surface GRIK2 expression. Interacts with KCTD7. Part of the BCR(GAN) complex containing GAN. Part of the BCR(KEAP1) complex containing KEAP1. Interacts with KLHL10. Interacts with KAT5 and ATF2. Interacts with KCTD17 in the BCR(KCTD17) E3 ubiquitin ligase complex, at least composed of CUL3, KCTD17 and RBX1. Interacts (when neddylated) with ARIH1; leading to activate the E3 ligase activity of ARIH1. Interacts with COPS9 isoform 2. Interacts with PPP2R5B; this interaction is indirect and mediated through KLHL15-binding and leads to PPP2R5B proteasomal degradation. Interacts with RBBP8/CtIP; this interaction is indirect and mediated through KLHL15-binding and leads to RBBP8 proteasomal degradation. Interacts with KLHL24 in the BCR(KLHL24) E3 ubiquitin ligase complex, composed of CUL3, RBX1 and KLHL24. Interacts with RHOBTB2. Interacts with AURKA and KLHL18 (via BTB domain). Interacts (unneddylated form) with DCUN1D1, DCUN1D2, DCUN1D3, DCUN1D4 and DCUN1D5; these interactions promote the cullin neddylation. Component of a BCR3 (BTB-CUL3-RBX1) E3 ubiquitin ligase complex, also named Cul3-RING ubiquitin ligase complex CUL3(KBTBD6/7), composed of CUL3, RBX1, KBTBD6 and KBTBD7. Component of the BCR(KBTBD2) E3 ubiquitin ligase complex, at least composed of CUL3, KBTBD2 and RBX1. Interacts with KBTBD2 (via the BTB domain). Component of the BCR(KBTBD4) E3 ubiquitin ligase complex, at least composed of CUL3, KBTBD4 and RBX1. Component of the BCR(ARMC5) E3 ubiquitin ligase complex, composed of CUL3, ARMC5 and RBX1. Post-translationally, neddylated. Attachment of NEDD8 is required for the E3 ubiquitin-protein ligase activity of the BCR complex. Deneddylated via its interaction with the COP9 signalosome (CSN) complex. As to expression, brain, spermatozoa, and testis (at protein level). Widely expressed.

The protein localises to the nucleus. It localises to the golgi apparatus. The protein resides in the cell projection. Its subcellular location is the cilium. It is found in the flagellum. The protein localises to the cytoplasm. It localises to the cytoskeleton. The protein resides in the spindle. Its subcellular location is the microtubule organizing center. It is found in the centrosome. The protein localises to the spindle pole. Its pathway is protein modification; protein ubiquitination. In terms of biological role, core component of multiple cullin-RING-based BCR (BTB-CUL3-RBX1) E3 ubiquitin-protein ligase complexes which mediate the ubiquitination and subsequent proteasomal degradation of target proteins. BCR complexes and ARIH1 collaborate in tandem to mediate ubiquitination of target proteins. As a scaffold protein may contribute to catalysis through positioning of the substrate and the ubiquitin-conjugating enzyme. The E3 ubiquitin-protein ligase activity of the complex is dependent on the neddylation of the cullin subunit and is inhibited by the association of the deneddylated cullin subunit with TIP120A/CAND1. The functional specificity of the BCR complex depends on the BTB domain-containing protein as the substrate recognition component. BCR(KLHL42) is involved in ubiquitination of KATNA1. BCR(SPOP) is involved in ubiquitination of BMI1/PCGF4, BRMS1, MACROH2A1 and DAXX, GLI2 and GLI3. Can also form a cullin-RING-based BCR (BTB-CUL3-RBX1) E3 ubiquitin-protein ligase complex containing homodimeric SPOPL or the heterodimer formed by SPOP and SPOPL; these complexes have lower ubiquitin ligase activity. BCR(KLHL9-KLHL13) controls the dynamic behavior of AURKB on mitotic chromosomes and thereby coordinates faithful mitotic progression and completion of cytokinesis. BCR(KLHL12) is involved in ER-Golgi transport by regulating the size of COPII coats, thereby playing a key role in collagen export, which is required for embryonic stem (ES) cells division: BCR(KLHL12) acts by mediating monoubiquitination of SEC31 (SEC31A or SEC31B). BCR(KLHL3) acts as a regulator of ion transport in the distal nephron; by mediating ubiquitination of WNK4. The BCR(KLHL20) E3 ubiquitin ligase complex is involved in interferon response and anterograde Golgi to endosome transport: it mediates both ubiquitination leading to degradation and 'Lys-33'-linked ubiquitination. The BCR(KLHL21) E3 ubiquitin ligase complex regulates localization of the chromosomal passenger complex (CPC) from chromosomes to the spindle midzone in anaphase and mediates the ubiquitination of AURKB. The BCR(KLHL22) ubiquitin ligase complex mediates monoubiquitination of PLK1, leading to PLK1 dissociation from phosphoreceptor proteins and subsequent removal from kinetochores, allowing silencing of the spindle assembly checkpoint (SAC) and chromosome segregation. The BCR(KLHL22) ubiquitin ligase complex is also responsible for the amino acid-stimulated 'Lys-48' polyubiquitination and proteasomal degradation of DEPDC5. Through the degradation of DEPDC5, releases the GATOR1 complex-mediated inhibition of the TORC1 pathway. The BCR(KLHL25) ubiquitin ligase complex is involved in translational homeostasis by mediating ubiquitination and subsequent degradation of hypophosphorylated EIF4EBP1 (4E-BP1). The BCR(KLHL25) ubiquitin ligase complex is also involved in lipid synthesis by mediating ubiquitination and degradation of ACLY. The BCR(KBTBD8) complex acts by mediating monoubiquitination of NOLC1 and TCOF1, leading to remodel the translational program of differentiating cells in favor of neural crest specification. Involved in ubiquitination of cyclin E and of cyclin D1 (in vitro) thus involved in regulation of G1/S transition. Involved in the ubiquitination of KEAP1, ENC1 and KLHL41. In concert with ATF2 and RBX1, promotes degradation of KAT5 thereby attenuating its ability to acetylate and activate ATM. The BCR(KCTD17) E3 ubiquitin ligase complex mediates ubiquitination and degradation of TCHP, a down-regulator of cilium assembly, thereby inducing ciliogenesis. The BCR(KLHL24) E3 ubiquitin ligase complex mediates ubiquitination of KRT14, controls KRT14 levels during keratinocytes differentiation, and is essential for skin integrity. The BCR(KLHL18) E3 ubiquitin ligase complex mediates the ubiquitination of AURKA leading to its activation at the centrosome which is required for initiating mitotic entry. The BCR(KEAP1) E3 ubiquitin ligase complex acts as a key sensor of oxidative and electrophilic stress by mediating ubiquitination and degradation of NFE2L2/NRF2, a transcription factor regulating expression of many cytoprotective genes. As part of the CUL3(KBTBD6/7) E3 ubiquitin ligase complex functions mediates 'Lys-48' ubiquitination and proteasomal degradation of TIAM1. By controlling the ubiquitination of that RAC1 guanine exchange factors (GEF), regulates RAC1 signal transduction and downstream biological processes including the organization of the cytoskeleton, cell migration and cell proliferation. The BCR(KBTBD4) E3 ubiquitin ligase complex targets CoREST corepressor complex components RCOR1, KDM1A/LSD1 and HDAC2 for proteasomal degradation with RCOR1 likely to be the primary target while degradation of KDM1A and HDAC2 is likely due to their association with RCOR1. It also targets RCOR3, MIER2 and MIER3 for proteasomal degradation as well as associated proteins ZNF217 and RREB1 with degradation being dependent on the presence of an ELM2 domain in the target proteins. The BCR(ARMC5) complex mediates premature transcription termination of transcripts that are unfavorably configured for transcriptional elongation by mediating ubiquitination of Pol II subunit POLR2A. Required for 'Lys-63'-linked ubiquitination of large ribosomal subunit protein MRPL12. In Homo sapiens (Human), this protein is Cullin-3.